The primary structure comprises 504 residues: Cytochrome P450 3A2 (504 aa).

Heme is bound at residue C443.

It belongs to the cytochrome P450 family. It depends on heme as a cofactor. As to expression, expressed in liver.

Its subcellular location is the endoplasmic reticulum membrane. It is found in the microsome membrane. It catalyses the reaction an organic molecule + reduced [NADPH--hemoprotein reductase] + O2 = an alcohol + oxidized [NADPH--hemoprotein reductase] + H2O + H(+). Functionally, cytochromes P450 are a group of heme-thiolate monooxygenases. In liver microsomes, this enzyme is involved in an NADPH-dependent electron transport pathway. It oxidizes a variety of structurally unrelated compounds, including steroids, fatty acids, and xenobiotics. The sequence is that of Cytochrome P450 3A2 (Cyp3a2) from Rattus norvegicus (Rat).